The following is a 434-amino-acid chain: Methyl-coenzyme M reductase subunit beta (434 aa).

Tyr-365 serves as a coordination point for coenzyme M. Gly-367 contributes to the coenzyme B binding site.

This sequence belongs to the methyl-coenzyme M reductase beta subunit family. In terms of assembly, MCR is a hexamer of two alpha, two beta, and two gamma chains, forming a dimer of heterotrimers. Coenzyme F430 serves as cofactor.

The protein resides in the cytoplasm. The catalysed reaction is coenzyme B + methyl-coenzyme M = methane + coenzyme M-coenzyme B heterodisulfide. Its pathway is one-carbon metabolism; methyl-coenzyme M reduction; methane from methyl-coenzyme M: step 1/1. Functionally, component of the methyl-coenzyme M reductase (MCR) I that catalyzes the reductive cleavage of methyl-coenzyme M (CoM-S-CH3 or 2-(methylthio)ethanesulfonate) using coenzyme B (CoB or 7-mercaptoheptanoylthreonine phosphate) as reductant which results in the production of methane and the mixed heterodisulfide of CoB and CoM (CoM-S-S-CoB). This is the final step in methanogenesis. The chain is Methyl-coenzyme M reductase subunit beta (mcrB) from Methanosarcina barkeri (strain Fusaro / DSM 804).